A 441-amino-acid polypeptide reads, in one-letter code: Ribulose bisphosphate carboxylase large chain (441 aa).

Lysine 5 is subject to N6,N6,N6-trimethyllysine. Residues asparagine 114 and threonine 164 each coordinate substrate. Lysine 166 (proton acceptor) is an active-site residue. Lysine 168 serves as a coordination point for substrate. Mg(2+) contacts are provided by lysine 192, aspartate 194, and glutamate 195. Lysine 192 bears the N6-carboxylysine mark. Residue histidine 285 is the Proton acceptor of the active site. Residues arginine 286, histidine 318, and serine 370 each contribute to the substrate site.

Belongs to the RuBisCO large chain family. Type I subfamily. In terms of assembly, heterohexadecamer of 8 large chains and 8 small chains; disulfide-linked. The disulfide link is formed within the large subunit homodimers. Requires Mg(2+) as cofactor. The disulfide bond which can form in the large chain dimeric partners within the hexadecamer appears to be associated with oxidative stress and protein turnover.

It localises to the plastid. The protein resides in the chloroplast. The catalysed reaction is 2 (2R)-3-phosphoglycerate + 2 H(+) = D-ribulose 1,5-bisphosphate + CO2 + H2O. It catalyses the reaction D-ribulose 1,5-bisphosphate + O2 = 2-phosphoglycolate + (2R)-3-phosphoglycerate + 2 H(+). In terms of biological role, ruBisCO catalyzes two reactions: the carboxylation of D-ribulose 1,5-bisphosphate, the primary event in carbon dioxide fixation, as well as the oxidative fragmentation of the pentose substrate in the photorespiration process. Both reactions occur simultaneously and in competition at the same active site. The chain is Ribulose bisphosphate carboxylase large chain from Begonia metallica x Begonia sanguinea.